A 946-amino-acid chain; its full sequence is Bifunctional lysine-specific demethylase and histidyl-hydroxylase NO66 (946 aa).

Residues 14 to 435 (YRGSATSKNY…TSAASKKNTV (422 aa)) are disordered. Polar residues-rich tracts occupy residues 17–28 (SATSKNYVQKGT) and 37–46 (AKNNNRNLAS). Over residues 59–73 (SGSYSDGDNGSSSSS) the composition is skewed to low complexity. Residues 99-110 (TLNNHSSQSSPE) show a composition bias toward polar residues. Positions 117–128 (ESLKRRNDEAEG) are enriched in basic and acidic residues. Residues 169 to 186 (TLNSHSSQSSPETPANTR) are compositionally biased toward polar residues. The segment covering 187-198 (ESLKRRTDEAEG) has biased composition (basic and acidic residues). Over residues 239-256 (TLNSHSYQSSPETPANTR) the composition is skewed to polar residues. Residues 257–268 (ESLKRRTDEAEG) show a composition bias toward basic and acidic residues. The residue at position 309 (threonine 309) is a Phosphothreonine. Residues 309–327 (TLNSHSSQSSPETPANTRE) show a composition bias toward polar residues. Positions 328 to 338 (SLNRRNYEAEG) are enriched in basic and acidic residues. Serine 339 is modified (phosphoserine). Over residues 379-397 (TLNSHSSQSSPETPANTRE) the composition is skewed to polar residues. Residues 398–408 (SLNRRNYEAEG) show a composition bias toward basic and acidic residues. The segment covering 416–433 (RTSSTPVGQSTSAASKKN) has biased composition (polar residues). The JmjC domain occupies 606–742 (NPSSYLVQLR…NLMEKLMPLV (137 aa)). Fe cation contacts are provided by histidine 646, aspartate 648, and histidine 708.

It belongs to the ROX family. NO66 subfamily. The cofactor is Fe(2+).

It is found in the nucleus. The enzyme catalyses N(6),N(6)-dimethyl-L-lysyl(36)-[histone H3] + 2 2-oxoglutarate + 2 O2 = L-lysyl(36)-[histone H3] + 2 formaldehyde + 2 succinate + 2 CO2. Its function is as follows. Oxygenase that can act as both a histone lysine demethylase and a ribosomal histidine hydroxylase. Specifically demethylates 'Lys-4' (H3K4me) and 'Lys-36' (H3K36me) of histone H3, thereby playing a central role in histone code. In Drosophila pseudoobscura pseudoobscura (Fruit fly), this protein is Bifunctional lysine-specific demethylase and histidyl-hydroxylase NO66.